The chain runs to 479 residues: PTS system sucrose-specific EIIBC component (479 aa).

Residues 4-87 (PAVAKELLTL…AKLTGMSEMS (84 aa)) form the PTS EIIB type-1 domain. Cysteine 26 serves as the catalytic Phosphocysteine intermediate; for EIIB activity. The next 11 membrane-spanning stretches (helical) occupy residues 112 to 132 (IFVP…IYNL), 158 to 178 (MINT…AFSA), 182 to 202 (FGGN…PDLL), 204 to 224 (GWGF…ILGF), 232 to 252 (QGSV…ELGL), 264 to 284 (LTPL…VGPF), 303 to 323 (AGFV…ITGM), 345 to 365 (FIFP…LAVG), 376 to 396 (IAIP…MFGV), 403 to 423 (PFIA…MFNV), and 448 to 468 (IAGM…LGIG). In terms of domain architecture, PTS EIIC type-1 spans 120–477 (IVAGGLLMGI…GDRAKVGKKA (358 aa)).

It is found in the cell inner membrane. It catalyses the reaction N(pros)-phospho-L-histidyl-[protein](out) + sucrose = sucrose 6(G)-phosphate(in) + L-histidyl-[protein]. The phosphoenolpyruvate-dependent sugar phosphotransferase system (sugar PTS), a major carbohydrate active transport system, catalyzes the phosphorylation of incoming sugar substrates concomitantly with their translocation across the cell membrane. This system is involved in sucrose transport. The chain is PTS system sucrose-specific EIIBC component from Vibrio alginolyticus.